A 259-amino-acid polypeptide reads, in one-letter code: MRNSFITLIFLLLLSGCSEEKEKVVEQESSESITPAQASTSDENNNQTTETTTPAVITPAVQEQIEQKPEVKTFKVTFKIDENDMVLGNKDSKIVVVEYFSPTCPHCAYYHSTIFPELKQKYIDTNKIAYVTREFIATKQDLDASILARCKGDINSFMLFHDIILKQQDKWSVSNKYRELLTDIGQLGGVTPEEYKKCLSDDKITETLIANTNFITKAPKFIGTPSFFVNGVQTENYSINSISAAIDKAIEESKNKIDL.

The N-terminal stretch at 1–20 (MRNSFITLIFLLLLSGCSEE) is a signal peptide. The interval 25-54 (VEQESSESITPAQASTSDENNNQTTETTTP) is disordered. Residues 33 to 42 (ITPAQASTSD) show a composition bias toward polar residues. The segment covering 43 to 54 (ENNNQTTETTTP) has biased composition (low complexity). The Thioredoxin domain occupies 47-251 (QTTETTTPAV…ISAAIDKAIE (205 aa)). The cysteines at positions 104 and 107 are disulfide-linked.

Belongs to the thioredoxin family. DsbA subfamily.

Its subcellular location is the periplasm. In terms of biological role, may be required for disulfide bond formation in some proteins. This is Putative protein-disulfide oxidoreductase RBE_1288 from Rickettsia bellii (strain RML369-C).